Consider the following 464-residue polypeptide: MKALYPDIITTVGIIFLIILELFLPSFDLIGFLGFLISFISGVLAIKYSLAGYRFNEWLLDINAFSLLLKGVMYILTSFVIFSSVSFFKSKKTFVENVYTFLLISLGLSIMVSSKNLAVILAGLELASISMYISVGMLRDDYISKEASFKYLVLGSMTTAFFGIGSAFYIGATSHLDIISVSVNHNTAFALASLFLFVAFALKVSAAPFHFWTPDAYEGAPTSNTAFISTVPKIGFYAVLFLLASYIFPVTNNFSYIVGIVGVISMFWGNLVAYAQNSAKRMLAYSSIGHAGYFLIGFSRYNPLSVSSTIFYVIVYAFATAGAFLVLSILEKNQSWTHDMSNYRALYKRSPFLATALALFLFALIGIPPFATFVGKLGIFLGLVNSNAWFFAILFVIGSIIAAGYYLKLIVYMFFKEPATKDNMSLSLNLFDTIGISAFLIIVFFFGIFPNILFDIILKDMFHG.

Helical transmembrane passes span 12–32, 33–53, 62–82, 93–113, 117–137, 152–172, 189–209, 227–247, 254–274, 282–304, 310–330, 351–371, 400–420, and 434–454; these read VGII…LIGF, LGFL…LAGY, INAF…FVIF, TFVE…IMVS, LAVI…SVGM, LVLG…YIGA, FALA…AAPF, FIST…ASYI, FSYI…LVAY, MLAY…YNPL, IFYV…LSIL, PFLA…PPFA, IIAA…EPAT, and IGIS…NILF.

The protein belongs to the complex I subunit 2 family. As to quaternary structure, NDH-1 is composed of 14 different subunits. Subunits NuoA, H, J, K, L, M, N constitute the membrane sector of the complex.

Its subcellular location is the cell inner membrane. The enzyme catalyses a quinone + NADH + 5 H(+)(in) = a quinol + NAD(+) + 4 H(+)(out). NDH-1 shuttles electrons from NADH, via FMN and iron-sulfur (Fe-S) centers, to quinones in the respiratory chain. The immediate electron acceptor for the enzyme in this species is believed to be ubiquinone. Couples the redox reaction to proton translocation (for every two electrons transferred, four hydrogen ions are translocated across the cytoplasmic membrane), and thus conserves the redox energy in a proton gradient. The sequence is that of NADH-quinone oxidoreductase subunit N 2 from Hydrogenobaculum sp. (strain Y04AAS1).